A 132-amino-acid chain; its full sequence is Fatty acid-binding protein, brain (132 aa).

Residue V2 is modified to N-acetylvaline. 127–129 (RCY) is an a fatty acid binding site.

The protein belongs to the calycin superfamily. Fatty-acid binding protein (FABP) family. As to expression, expressed in brain and other neural tissues.

The protein resides in the cytoplasm. Its function is as follows. B-FABP could be involved in the transport of a so far unknown hydrophobic ligand with potential morphogenic activity during CNS development. It is required for the establishment of the radial glial fiber system in developing brain, a system that is necessary for the migration of immature neurons to establish cortical layers. In Mus musculus (Mouse), this protein is Fatty acid-binding protein, brain (Fabp7).